A 188-amino-acid polypeptide reads, in one-letter code: Large ribosomal subunit protein eL18 (188 aa).

The disordered stretch occupies residues 153–188; it reads GKAPGTPHSHTKPYVRSKGRKFERARGRRASCGYKN. Over residues 161–171 the composition is skewed to basic residues; it reads SHTKPYVRSKG.

It belongs to the eukaryotic ribosomal protein eL18 family. In terms of assembly, component of the large ribosomal subunit.

It is found in the cytoplasm. The protein resides in the cytosol. It localises to the rough endoplasmic reticulum. Its function is as follows. Component of the large ribosomal subunit. The ribosome is a large ribonucleoprotein complex responsible for the synthesis of proteins in the cell. The protein is Large ribosomal subunit protein eL18 (rpl18) of Oreochromis mossambicus (Mozambique tilapia).